The chain runs to 462 residues: 3-ketoacyl CoA thiolase 1, peroxisomal (462 aa).

The N-terminal 34 residues, 1–34 (MEKAIQRQRVLLEHLQPIRHHTHDHSSSLTTSIC), are a transit peptide targeting the peroxisome. The Acyl-thioester intermediate role is filled by Cys138. Active-site proton acceptor residues include His393 and Cys425. Gly427 is a binding site for substrate.

It belongs to the thiolase-like superfamily. Thiolase family. Homodimer.

The protein resides in the peroxisome. It carries out the reaction an acyl-CoA + acetyl-CoA = a 3-oxoacyl-CoA + CoA. It participates in aromatic compound metabolism. It functions in the pathway lipid metabolism; fatty acid metabolism. Component of the floral volatile benzenoid/phenylpropanoid (FVBP) biosynthetic pathway. Thiolase that catalyzes the conversion of 3-oxo-3-phenylpropionyl-CoA (benzoylacetyl-CoA) to benzoyl-CoA. This chain is 3-ketoacyl CoA thiolase 1, peroxisomal, found in Petunia hybrida (Petunia).